The primary structure comprises 486 residues: HTH-type transcriptional regulator PrpR (486 aa).

The HTH cro/C1-type domain maps to 22–76 (LRRLRQERGLTQVALAKALDLSTSYVNQLENDQRPITVPVLLLLTERFDLSAQYF). Residues 33–52 (QVALAKALDLSTSYVNQLEN) constitute a DNA-binding region (H-T-H motif).

Belongs to the short-chain fatty acyl-CoA assimilation regulator (ScfR) family.

Its pathway is organic acid metabolism; propanoate degradation. It participates in steroid metabolism; cholesterol metabolism. In terms of biological role, plays a key role in regulating expression of enzymes involved in the catabolism of short chain fatty acids (SCFA) via both the glyoxylate (acetyl degradation route) and the methylcitrate cycle (propionate degradation route). Required for intracellular growth in macrophages and for the assimilation of cholesterol-derived propionate. PrpR acts as a transcriptional activator of prpDC and icl genes when propionate is the main carbon source, and as a ramB repressor. During growth on propionate, PrpR also acts as a transcriptional repressor of dnaA, which encodes the DnaA initiator protein responsible for initiating chromosomal replication. It is possibly involved in the regulation of genes responsible for controlling cholesterol utilization. The chain is HTH-type transcriptional regulator PrpR from Mycobacterium tuberculosis (strain ATCC 25618 / H37Rv).